Reading from the N-terminus, the 155-residue chain is Arginine repressor (155 aa).

This sequence belongs to the ArgR family.

It localises to the cytoplasm. Its pathway is amino-acid biosynthesis; L-arginine biosynthesis [regulation]. Functionally, regulates arginine biosynthesis genes. The polypeptide is Arginine repressor (Mannheimia succiniciproducens (strain KCTC 0769BP / MBEL55E)).